Reading from the N-terminus, the 279-residue chain is uncharacterized protein (279 aa).

3 helical membrane-spanning segments follow: residues 31–51, 67–87, and 115–135; these read GYIAQALGIADVLAVAYFHAT, LLSIGHYAIALYAALIEAKII, and EITGGSLGHGLGIAVGMSLAL.

The protein belongs to the transketolase family. Thiamine diphosphate serves as cofactor.

The protein resides in the cell membrane. This is an uncharacterized protein from Sinorhizobium fredii (strain NBRC 101917 / NGR234).